Reading from the N-terminus, the 214-residue chain is Nicotinamidase (214 aa).

Aspartate 18 serves as the catalytic Proton acceptor. Aspartate 56, histidine 58, histidine 62, and histidine 91 together coordinate a divalent metal cation. The active site involves lysine 116. The active-site Nucleophile is the cysteine 161.

This sequence belongs to the isochorismatase family. The cofactor is a divalent metal cation.

It catalyses the reaction nicotinamide + H2O = nicotinate + NH4(+). It functions in the pathway cofactor biosynthesis; nicotinate biosynthesis; nicotinate from nicotinamide: step 1/1. In terms of biological role, catalyzes the deamidation of nicotinamide (NAM) into nicotinate (Na). Functions in the deamidating salvage pathway for production of NAD from nicotinamide. The chain is Nicotinamidase from Acinetobacter baylyi (strain ATCC 33305 / BD413 / ADP1).